The sequence spans 446 residues: Histidine--tRNA ligase (446 aa).

This sequence belongs to the class-II aminoacyl-tRNA synthetase family. In terms of assembly, homodimer.

The protein resides in the cytoplasm. The enzyme catalyses tRNA(His) + L-histidine + ATP = L-histidyl-tRNA(His) + AMP + diphosphate + H(+). This chain is Histidine--tRNA ligase, found in Paraburkholderia phymatum (strain DSM 17167 / CIP 108236 / LMG 21445 / STM815) (Burkholderia phymatum).